The chain runs to 1070 residues: Inactive tyrosine-protein kinase 7 (1070 aa).

Residues methionine 1–threonine 30 form the signal peptide. Ig-like C2-type domains lie at alanine 31–asparagine 120, proline 128–serine 218, alanine 225–leucine 317, proline 309–threonine 407, proline 412–glutamine 497, lysine 503–leucine 586, and glycine 578–tyrosine 680. The Extracellular segment spans residues alanine 31–threonine 704. Cysteine 53 and cysteine 101 are oxidised to a cystine. Asparagine 116, asparagine 175, asparagine 184, asparagine 214, asparagine 268, and asparagine 283 each carry an N-linked (GlcNAc...) asparagine glycan. The cysteines at positions 150 and 200 are disulfide-linked. Disulfide bonds link cysteine 246/cysteine 301 and cysteine 343/cysteine 391. 4 N-linked (GlcNAc...) asparagine glycosylation sites follow: asparagine 405, asparagine 463, asparagine 567, and asparagine 646. 3 cysteine pairs are disulfide-bonded: cysteine 433-cysteine 481, cysteine 524-cysteine 570, and cysteine 613-cysteine 664. The chain crosses the membrane as a helical span at residues isoleucine 705–tyrosine 725. At cysteine 726–proline 1070 the chain is on the cytoplasmic side. Disordered stretches follow at residues glutamine 736–proline 759 and glycine 773–arginine 793. The segment at serine 794–proline 1070 is interaction with CTNNB1. Positions leucine 796–valine 1066 constitute a Protein kinase; inactive domain. Serine 1064 carries the phosphoserine modification.

It belongs to the protein kinase superfamily. Tyr protein kinase family. Insulin receptor subfamily. As to quaternary structure, interacts with CTNNB1. MMP14 cleaves PTK7 between Pro-621 and Leu-622 generating an N-terminal soluble (70 kDa) fragment and a membrane C-terminal (50 kDa) fragment. Proteolysis by MMP14 regulates PTK7 function in non-canonical Wnt signaling pathway. Highly expressed in lung, liver, pancreas, kidney, placenta and melanocytes. Weakly expressed in thyroid gland, ovary, brain, heart and skeletal muscle. Also expressed in erythroleukemia cells. But not expressed in colon.

Its subcellular location is the membrane. The protein localises to the cell junction. Its function is as follows. Inactive tyrosine kinase involved in Wnt signaling pathway. Component of both the non-canonical (also known as the Wnt/planar cell polarity signaling) and the canonical Wnt signaling pathway. Functions in cell adhesion, cell migration, cell polarity, proliferation, actin cytoskeleton reorganization and apoptosis. Has a role in embryogenesis, epithelial tissue organization and angiogenesis. The protein is Inactive tyrosine-protein kinase 7 (PTK7) of Homo sapiens (Human).